The chain runs to 1481 residues: DNA-directed RNA polymerase subunit beta'' (1481 aa).

Residues Cys217, Cys291, Cys298, and Cys301 each coordinate Zn(2+).

The protein belongs to the RNA polymerase beta' chain family. RpoC2 subfamily. In plastids the minimal PEP RNA polymerase catalytic core is composed of four subunits: alpha, beta, beta', and beta''. When a (nuclear-encoded) sigma factor is associated with the core the holoenzyme is formed, which can initiate transcription. Zn(2+) is required as a cofactor.

It is found in the plastid. It localises to the chloroplast. It carries out the reaction RNA(n) + a ribonucleoside 5'-triphosphate = RNA(n+1) + diphosphate. In terms of biological role, DNA-dependent RNA polymerase catalyzes the transcription of DNA into RNA using the four ribonucleoside triphosphates as substrates. This is DNA-directed RNA polymerase subunit beta'' from Trieres chinensis (Marine centric diatom).